The primary structure comprises 201 residues: 3-isopropylmalate dehydratase small subunit (201 aa).

This sequence belongs to the LeuD family. LeuD type 1 subfamily. In terms of assembly, heterodimer of LeuC and LeuD.

It catalyses the reaction (2R,3S)-3-isopropylmalate = (2S)-2-isopropylmalate. It functions in the pathway amino-acid biosynthesis; L-leucine biosynthesis; L-leucine from 3-methyl-2-oxobutanoate: step 2/4. Catalyzes the isomerization between 2-isopropylmalate and 3-isopropylmalate, via the formation of 2-isopropylmaleate. In Enterobacter sp. (strain 638), this protein is 3-isopropylmalate dehydratase small subunit.